Here is a 695-residue protein sequence, read N- to C-terminus: Nucleoprotein (695 aa).

Coiled-coil stretches lie at residues V316–E341 and Q372–G400. Disordered regions lie at residues R426–D458 and T472–R611. Over residues E474–L484 the composition is skewed to polar residues. Positions I502 to R516 are enriched in basic and acidic residues. The segment covering Q529–P547 has biased composition (acidic residues). Positions P603–P606 match the PTAP/PSAP motif motif.

This sequence belongs to the filoviruses nucleoprotein family. Homooligomer. Homomultimerizes to form the nucleocapsid. Binds to viral genomic RNA. Interacts with VP35 and VP30 to form the nucleocapsid. Also interacts with VP24 and VP40. In terms of processing, phosphorylated.

Its subcellular location is the virion. It localises to the host cytoplasm. Encapsidates the genome, protecting it from nucleases. The encapsidated genomic RNA is termed the nucleocapsid and serves as template for transcription and replication. During replication, encapsidation by NP is coupled to RNA synthesis and all replicative products are resistant to nucleases. This chain is Nucleoprotein (NP), found in Lake Victoria marburgvirus (strain Ravn-87) (MARV).